A 427-amino-acid polypeptide reads, in one-letter code: Homoserine O-acetyltransferase FUB5 (427 aa).

Residues 1-13 (MTTTTTAPALPTP) show a composition bias toward low complexity. Residues 1-35 (MTTTTTAPALPTPIHDGLGNGTTYERSIPRPVNPF) form a disordered region. An AB hydrolase-1 domain is found at 77 to 400 (NVMIICHALS…VSDDGHDAFL (324 aa)). Ser-175 (nucleophile) is an active-site residue. The tract at residues 260-297 (RFGRDTGNKKKAKNKGSETLPSNSTPIHSQGGADETPV) is disordered. Positions 276–287 (SETLPSNSTPIH) are enriched in polar residues. Residues Asp-367 and His-396 contribute to the active site.

This sequence belongs to the AB hydrolase superfamily. MetX family.

The enzyme catalyses L-homoserine + acetyl-CoA = O-acetyl-L-homoserine + CoA. Its pathway is mycotoxin biosynthesis. In terms of biological role, homoserine O-acetyltransferase; part of the gene cluster that mediates the biosynthesis of fusaric acid, a mycotoxin with low to moderate toxicity to animals and humans, but with high phytotoxic properties. L-aspartate is suggested as fusaric acid amino acid precursor that is activated and further processed to O-acetyl-L-homoserine by cluster enzymes aspartate kinase FUB3 and homoserine O-acetyltransferase FUB5, as well as enzymes of the primary metabolism. The polyketide synthase (PKS) FUB1 generates the triketide trans-2-hexenal which is presumptively released by the hydrolase FUB4 and linked to the NRPS-bound amino acid precursor by NAD(P)-dependent dehydrogenase FUB6. FUB1, FUB4, and the non-canonical NRPS Fub8 may form an enzyme complex. Further processing of the NRPS-bound intermediate might be carried out by FUB6 and the sulfhydrylase FUB7, enabling a spontaneous electrocyclization to close the carbon backbone of fusaric acid. Dihydrofusaric acid is likely to be released via reduction by the thioester reductase (TR) domain of FUB8 whereupon the final oxidation to fusaric acid may (also) be performed by the FMN-dependent dehydrogenase FUB9. The polypeptide is Homoserine O-acetyltransferase FUB5 (Gibberella fujikuroi (strain CBS 195.34 / IMI 58289 / NRRL A-6831) (Bakanae and foot rot disease fungus)).